Consider the following 68-residue polypeptide: Copper transport protein ATOX1 (68 aa).

The region spanning 1–63 (MPKHEFSVDM…TLGKTGKAVS (63 aa)) is the HMA domain. 2 residues coordinate Cu cation: C12 and C15. S47 carries the phosphoserine modification. Residue K60 is modified to N6-acetyllysine.

Belongs to the ATX1 family. Homodimer. Interacts with ATP7B. Interacts with ATP7A. Interacts (via dimer form) with SLC31A1 (via C-terminal domain); this interaction improves ATOX1 stability and controls intracellular Cu(I) levels.

Its function is as follows. Binds and deliver cytosolic copper to the copper ATPase proteins. May be important in cellular antioxidant defense. In Bos taurus (Bovine), this protein is Copper transport protein ATOX1.